The following is a 305-amino-acid chain: Dihydroorotate dehydrogenase B (NAD(+)), catalytic subunit (305 aa).

FMN-binding positions include S23 and K47–G48. Residues K47 and N71–L75 contribute to the substrate site. FMN-binding residues include N101 and N129. Residue N129 coordinates substrate. C132 functions as the Nucleophile in the catalytic mechanism. Residues K167 and I193 each coordinate FMN. N194–T195 is a binding site for substrate. Residues G219, G245–G246, and G267–T268 contribute to the FMN site.

This sequence belongs to the dihydroorotate dehydrogenase family. Type 1 subfamily. In terms of assembly, heterotetramer of 2 PyrK and 2 PyrD type B subunits. It depends on FMN as a cofactor.

It is found in the cytoplasm. The catalysed reaction is (S)-dihydroorotate + NAD(+) = orotate + NADH + H(+). The protein operates within pyrimidine metabolism; UMP biosynthesis via de novo pathway; orotate from (S)-dihydroorotate (NAD(+) route): step 1/1. Catalyzes the conversion of dihydroorotate to orotate with NAD(+) as electron acceptor. The sequence is that of Dihydroorotate dehydrogenase B (NAD(+)), catalytic subunit (pyrD) from Geobacter sulfurreducens (strain ATCC 51573 / DSM 12127 / PCA).